An 869-amino-acid chain; its full sequence is Dynamin-3 (869 aa).

In terms of domain architecture, Dynamin-type G spans 28–294 (LLELPQIAVV…LTNHIRDTLP (267 aa)). The tract at residues 38-45 (GGQSAGKS) is G1 motif. 38 to 46 (GGQSAGKSS) serves as a coordination point for GTP. A G2 motif region spans residues 64–66 (VTR). The interval 136–139 (DLPG) is G3 motif. The tract at residues 205-208 (TKLD) is G4 motif. GTP is bound at residue 205–211 (TKLDLMD). Tyr231 is modified (phosphotyrosine). Residues 235 to 238 (VNRS) are G5 motif. A GTP-binding site is contributed by 236 to 239 (NRSQ). The residue at position 299 (Lys299) is an N6-acetyllysine. The PH domain occupies 525–631 (IVIRKGWLTV…WKASLLRAGV (107 aa)). Tyr603 is modified (phosphotyrosine). Position 604 is an N6-acetyllysine (Lys604). Positions 659–750 (VETIRNLVDS…IIGDINTVTV (92 aa)) constitute a GED domain. The disordered stretch occupies residues 752–869 (TPAPPPVDDS…IRPLESSLLD (118 aa)). 2 positions are modified to phosphoserine: Ser769 and Ser773. The segment covering 775 to 796 (TTQRRLTLSAPLPRPASSRGPA) has biased composition (low complexity). 2 stretches are compositionally biased toward pro residues: residues 797-822 (PAIP…PPFP) and 832-855 (PQVP…PSPT). Ser853 is modified (phosphoserine).

This sequence belongs to the TRAFAC class dynamin-like GTPase superfamily. Dynamin/Fzo/YdjA family. In terms of tissue distribution, isoform-specific expression in germ-cell-depleted testis (Sertoli cells), brain (peripheral sensory neurons), lung and heart.

It is found in the cytoplasm. The protein resides in the cytoskeleton. It localises to the cytoplasmic vesicle. The protein localises to the golgi apparatus. It catalyses the reaction GTP + H2O = GDP + phosphate + H(+). In terms of biological role, microtubule-associated force-producing protein involved in producing microtubule bundles and able to bind and hydrolyze GTP. Most probably involved in vesicular trafficking processes, in particular endocytosis. This is Dynamin-3 (Dnm3) from Rattus norvegicus (Rat).